We begin with the raw amino-acid sequence, 27 residues long: Conotoxin flf14a (27 aa).

2 disulfides stabilise this stretch: Cys-6–Cys-26 and Cys-10–Cys-22.

Expressed by the venom duct.

The protein resides in the secreted. This chain is Conotoxin flf14a, found in Conus anabathrum floridanus (Florida cone).